The following is a 195-amino-acid chain: Pyridoxal 5'-phosphate synthase subunit PdxT (195 aa).

L-glutamine is bound at residue 46 to 48 (GES). Catalysis depends on Cys-78, which acts as the Nucleophile. L-glutamine-binding positions include Arg-105 and 133 to 134 (IR). Residues His-169 and Glu-171 each act as charge relay system in the active site.

This sequence belongs to the glutaminase PdxT/SNO family. In terms of assembly, in the presence of PdxS, forms a dodecamer of heterodimers. Only shows activity in the heterodimer.

The enzyme catalyses aldehydo-D-ribose 5-phosphate + D-glyceraldehyde 3-phosphate + L-glutamine = pyridoxal 5'-phosphate + L-glutamate + phosphate + 3 H2O + H(+). It carries out the reaction L-glutamine + H2O = L-glutamate + NH4(+). It participates in cofactor biosynthesis; pyridoxal 5'-phosphate biosynthesis. Functionally, catalyzes the hydrolysis of glutamine to glutamate and ammonia as part of the biosynthesis of pyridoxal 5'-phosphate. The resulting ammonia molecule is channeled to the active site of PdxS. The protein is Pyridoxal 5'-phosphate synthase subunit PdxT of Shouchella clausii (strain KSM-K16) (Alkalihalobacillus clausii).